A 278-amino-acid chain; its full sequence is 3-oxoacyl-[acyl-carrier-protein] reductase (278 aa).

NADP(+) contacts are provided by T13, R14, I16, S36, S40, T44, D66, F67, E77, G122, Q125, and E126. S182 serves as the catalytic Proton donor. NADP(+) contacts are provided by Y198, K202, L230, and V231. The active-site Proton acceptor is Y198. K202 acts as the Lowers pKa of active site Tyr in catalysis.

The protein belongs to the short-chain dehydrogenases/reductases (SDR) family.

It localises to the mitochondrion. The enzyme catalyses a (3R)-hydroxyacyl-[ACP] + NADP(+) = a 3-oxoacyl-[ACP] + NADPH + H(+). It functions in the pathway lipid metabolism; fatty acid biosynthesis. In terms of biological role, involved in biosynthesis of fatty acids in mitochondria. This chain is 3-oxoacyl-[acyl-carrier-protein] reductase (OAR1), found in Saccharomyces cerevisiae (strain ATCC 204508 / S288c) (Baker's yeast).